Here is a 118-residue protein sequence, read N- to C-terminus: Holo-[acyl-carrier-protein] synthase (118 aa).

Residues Asp-8 and Glu-50 each coordinate Mg(2+).

It belongs to the P-Pant transferase superfamily. AcpS family. Mg(2+) serves as cofactor.

It localises to the cytoplasm. The catalysed reaction is apo-[ACP] + CoA = holo-[ACP] + adenosine 3',5'-bisphosphate + H(+). Functionally, transfers the 4'-phosphopantetheine moiety from coenzyme A to a Ser of acyl-carrier-protein. This Leifsonia xyli subsp. xyli (strain CTCB07) protein is Holo-[acyl-carrier-protein] synthase.